Consider the following 267-residue polypeptide: Indole-3-glycerol phosphate synthase (267 aa).

It belongs to the TrpC family.

It catalyses the reaction 1-(2-carboxyphenylamino)-1-deoxy-D-ribulose 5-phosphate + H(+) = (1S,2R)-1-C-(indol-3-yl)glycerol 3-phosphate + CO2 + H2O. It participates in amino-acid biosynthesis; L-tryptophan biosynthesis; L-tryptophan from chorismate: step 4/5. This is Indole-3-glycerol phosphate synthase from Polynucleobacter necessarius subsp. necessarius (strain STIR1).